A 520-amino-acid chain; its full sequence is 6-phosphofructo-2-kinase/fructose-2,6-bisphosphatase 3 (520 aa).

Positions 1-245 (MPLELTQSRV…VYYLMNIHVQ (245 aa)) are 6-phosphofructo-2-kinase. An ATP-binding site is contributed by 42-50 (GLPARGKTY). Residues R75 and R99 each coordinate beta-D-fructose 6-phosphate. D125 is an active-site residue. Beta-D-fructose 6-phosphate contacts are provided by T127 and R133. The active site involves C155. 164-169 (NIMEVK) is a binding site for ATP. Positions 169, 190, and 194 each coordinate beta-D-fructose 6-phosphate. Residues 246 to 520 (PRTIYLCRHG…RSSADSSRKH (275 aa)) form a fructose-2,6-bisphosphatase region. A beta-D-fructose 2,6-bisphosphate-binding site is contributed by R253. The Tele-phosphohistidine intermediate role is filled by H254. Positions 260 and 266 each coordinate beta-D-fructose 2,6-bisphosphate. Catalysis depends on E323, which acts as the Proton donor/acceptor. Residues Y334, R348, K352, Y363, Q389, and R393 each coordinate beta-D-fructose 2,6-bisphosphate. 345–348 (YALR) contacts ATP. Residues 389–393 (QAVLR) and Y425 each bind ATP. The segment at 443–520 (RERSEDAKKG…RSSADSSRKH (78 aa)) is disordered. At S461 the chain carries Phosphoserine; by AMPK. Phosphothreonine is present on T463. Residue S467 is modified to Phosphoserine. T471 carries the post-translational modification Phosphothreonine; by PKC. Polar residues predominate over residues 502–520 (LPGQNMKGSRSSADSSRKH).

It in the C-terminal section; belongs to the phosphoglycerate mutase family. In terms of assembly, homodimer. Forms a heterodimer with PFKFB2. Post-translationally, phosphorylation by AMPK stimulates activity. Ubiquitous.

It catalyses the reaction beta-D-fructose 2,6-bisphosphate + H2O = beta-D-fructose 6-phosphate + phosphate. The enzyme catalyses beta-D-fructose 6-phosphate + ATP = beta-D-fructose 2,6-bisphosphate + ADP + H(+). Functionally, catalyzes both the synthesis and degradation of fructose 2,6-bisphosphate. This is 6-phosphofructo-2-kinase/fructose-2,6-bisphosphatase 3 (PFKFB3) from Homo sapiens (Human).